The sequence spans 401 residues: Probable tRNA sulfurtransferase (401 aa).

In terms of domain architecture, THUMP spans 60 to 165 (EPIIEKLKTV…QDGTYVTCRD (106 aa)). ATP contacts are provided by residues 183–184 (ML), 208–209 (HF), Arg265, Gly287, and Gln296.

The protein belongs to the ThiI family.

Its subcellular location is the cytoplasm. It catalyses the reaction [ThiI sulfur-carrier protein]-S-sulfanyl-L-cysteine + a uridine in tRNA + 2 reduced [2Fe-2S]-[ferredoxin] + ATP + H(+) = [ThiI sulfur-carrier protein]-L-cysteine + a 4-thiouridine in tRNA + 2 oxidized [2Fe-2S]-[ferredoxin] + AMP + diphosphate. The enzyme catalyses [ThiS sulfur-carrier protein]-C-terminal Gly-Gly-AMP + S-sulfanyl-L-cysteinyl-[cysteine desulfurase] + AH2 = [ThiS sulfur-carrier protein]-C-terminal-Gly-aminoethanethioate + L-cysteinyl-[cysteine desulfurase] + A + AMP + 2 H(+). The protein operates within cofactor biosynthesis; thiamine diphosphate biosynthesis. In terms of biological role, catalyzes the ATP-dependent transfer of a sulfur to tRNA to produce 4-thiouridine in position 8 of tRNAs, which functions as a near-UV photosensor. Also catalyzes the transfer of sulfur to the sulfur carrier protein ThiS, forming ThiS-thiocarboxylate. This is a step in the synthesis of thiazole, in the thiamine biosynthesis pathway. The sulfur is donated as persulfide by IscS. The protein is Probable tRNA sulfurtransferase of Geobacillus kaustophilus (strain HTA426).